A 588-amino-acid chain; its full sequence is Beta-(1--&gt;2)glucan export ATP-binding/permease protein NdvA (588 aa).

In terms of domain architecture, ABC transmembrane type-1 spans 21–301 (VAVVVIANVI…MRQFVTQIFE (281 aa)). The next 6 helical transmembrane spans lie at 22-42 (AVVV…PVLF), 57-77 (PILI…VAVA), 136-156 (THLA…AMDL), 158-178 (LSFV…WVMG), 248-268 (TAST…VKNG), and 272-292 (VGDV…LDQM). The 235-residue stretch at 335-569 (VEFRNINFGF…GGRFTSLLRT (235 aa)) folds into the ABC transporter domain. 368–375 (GPTGAGKT) lines the ATP pocket.

This sequence belongs to the ABC transporter superfamily. Beta-(1--&gt;2)glucan exporter (TC 3.A.1.108.1) family. Homodimer.

Its subcellular location is the cell inner membrane. The catalysed reaction is [(1-&gt;2)-beta-D-glucosyl](n)(in) + ATP + H2O = [(1-&gt;2)-beta-D-glucosyl](n)(out) + ADP + phosphate + H(+). Its function is as follows. Involved in beta-(1--&gt;2)glucan export which is required for crown gall tumor formation. Transmembrane domains (TMD) form a pore in the inner membrane and the ATP-binding domain (NBD) is responsible for energy generation. The protein is Beta-(1--&gt;2)glucan export ATP-binding/permease protein NdvA of Rhizobium radiobacter (Agrobacterium tumefaciens).